The chain runs to 62 residues: Synergistic-type venom protein C8S2, chain 2 (62 aa).

3 disulfide bridges follow: C3-C24, C17-C42, and C46-C57.

Belongs to the three-finger toxin family. Short-chain subfamily. Aminergic toxin sub-subfamily. In terms of assembly, heterodimer of C8S2 chain 1 (AC P01410) and chain 2; disulfide-linked. As to expression, expressed by the venom gland.

The protein localises to the secreted. In terms of biological role, this protein shows a synergetic toxic effect in that it enhances the toxicity of other toxins. This is Synergistic-type venom protein C8S2, chain 2 from Dendroaspis angusticeps (Eastern green mamba).